We begin with the raw amino-acid sequence, 283 residues long: Phosphatidylserine decarboxylase proenzyme (283 aa).

Active-site charge relay system; for autoendoproteolytic cleavage activity residues include aspartate 90, histidine 143, and serine 248. The active-site Schiff-base intermediate with substrate; via pyruvic acid; for decarboxylase activity is serine 248. Position 248 is a pyruvic acid (Ser); by autocatalysis (serine 248).

This sequence belongs to the phosphatidylserine decarboxylase family. PSD-B subfamily. Prokaryotic type I sub-subfamily. As to quaternary structure, heterodimer of a large membrane-associated beta subunit and a small pyruvoyl-containing alpha subunit. Requires pyruvate as cofactor. Post-translationally, is synthesized initially as an inactive proenzyme. Formation of the active enzyme involves a self-maturation process in which the active site pyruvoyl group is generated from an internal serine residue via an autocatalytic post-translational modification. Two non-identical subunits are generated from the proenzyme in this reaction, and the pyruvate is formed at the N-terminus of the alpha chain, which is derived from the carboxyl end of the proenzyme. The autoendoproteolytic cleavage occurs by a canonical serine protease mechanism, in which the side chain hydroxyl group of the serine supplies its oxygen atom to form the C-terminus of the beta chain, while the remainder of the serine residue undergoes an oxidative deamination to produce ammonia and the pyruvoyl prosthetic group on the alpha chain. During this reaction, the Ser that is part of the protease active site of the proenzyme becomes the pyruvoyl prosthetic group, which constitutes an essential element of the active site of the mature decarboxylase.

The protein resides in the cell membrane. It catalyses the reaction a 1,2-diacyl-sn-glycero-3-phospho-L-serine + H(+) = a 1,2-diacyl-sn-glycero-3-phosphoethanolamine + CO2. Its pathway is phospholipid metabolism; phosphatidylethanolamine biosynthesis; phosphatidylethanolamine from CDP-diacylglycerol: step 2/2. In terms of biological role, catalyzes the formation of phosphatidylethanolamine (PtdEtn) from phosphatidylserine (PtdSer). This chain is Phosphatidylserine decarboxylase proenzyme, found in Francisella tularensis subsp. mediasiatica (strain FSC147).